The following is a 416-amino-acid chain: Ribulose bisphosphate carboxylase large chain (416 aa).

Residues asparagine 102 and threonine 152 each coordinate substrate. Lysine 154 functions as the Proton acceptor in the catalytic mechanism. Residue lysine 156 participates in substrate binding. Mg(2+) contacts are provided by lysine 180, aspartate 182, and glutamate 183. Lysine 180 carries the N6-carboxylysine modification. The active-site Proton acceptor is the histidine 273. Substrate contacts are provided by arginine 274, histidine 306, and serine 358.

It belongs to the RuBisCO large chain family. Type I subfamily. Heterohexadecamer of 8 large chains and 8 small chains; disulfide-linked. The disulfide link is formed within the large subunit homodimers. The cofactor is Mg(2+). In terms of processing, the disulfide bond which can form in the large chain dimeric partners within the hexadecamer appears to be associated with oxidative stress and protein turnover.

Its subcellular location is the plastid. The protein resides in the chloroplast. It carries out the reaction 2 (2R)-3-phosphoglycerate + 2 H(+) = D-ribulose 1,5-bisphosphate + CO2 + H2O. The catalysed reaction is D-ribulose 1,5-bisphosphate + O2 = 2-phosphoglycolate + (2R)-3-phosphoglycerate + 2 H(+). In terms of biological role, ruBisCO catalyzes two reactions: the carboxylation of D-ribulose 1,5-bisphosphate, the primary event in carbon dioxide fixation, as well as the oxidative fragmentation of the pentose substrate in the photorespiration process. Both reactions occur simultaneously and in competition at the same active site. This Arthropteris beckleri (Fern) protein is Ribulose bisphosphate carboxylase large chain (rbcL).